The primary structure comprises 503 residues: ATP synthase subunit alpha (503 aa).

169–176 is an ATP binding site; that stretch reads GDRQTGKT.

This sequence belongs to the ATPase alpha/beta chains family. F-type ATPases have 2 components, CF(1) - the catalytic core - and CF(0) - the membrane proton channel. CF(1) has five subunits: alpha(3), beta(3), gamma(1), delta(1), epsilon(1). CF(0) has three main subunits: a(1), b(2) and c(9-12). The alpha and beta chains form an alternating ring which encloses part of the gamma chain. CF(1) is attached to CF(0) by a central stalk formed by the gamma and epsilon chains, while a peripheral stalk is formed by the delta and b chains.

The protein resides in the cell membrane. The catalysed reaction is ATP + H2O + 4 H(+)(in) = ADP + phosphate + 5 H(+)(out). Functionally, produces ATP from ADP in the presence of a proton gradient across the membrane. The alpha chain is a regulatory subunit. This is ATP synthase subunit alpha from Macrococcus caseolyticus (strain JCSC5402) (Macrococcoides caseolyticum).